We begin with the raw amino-acid sequence, 308 residues long: Probable 5-dehydro-4-deoxyglucarate dehydratase (308 aa).

This sequence belongs to the DapA family.

It carries out the reaction 5-dehydro-4-deoxy-D-glucarate + H(+) = 2,5-dioxopentanoate + CO2 + H2O. It participates in carbohydrate acid metabolism; D-glucarate degradation; 2,5-dioxopentanoate from D-glucarate: step 2/2. The chain is Probable 5-dehydro-4-deoxyglucarate dehydratase (ycbC) from Bacillus subtilis (strain 168).